A 586-amino-acid polypeptide reads, in one-letter code: Clathrin heavy chain linker domain-containing protein 1 (586 aa).

Positions 174 to 232 form a coiled coil; the sequence is MNLDALTKYMKHLEDKYAEIKQAMLIKYVPAQRKADLDEEMIVLLKRRDVAENLNKKLQ.

In Homo sapiens (Human), this protein is Clathrin heavy chain linker domain-containing protein 1 (CLHC1).